We begin with the raw amino-acid sequence, 278 residues long: Proteolipid protein DM beta (278 aa).

A run of 4 helical transmembrane segments spans residues 30–46 (LIAT…FCGC), 84–100 (VIYG…ILLM), 130–146 (FIML…GVTA), and 213–229 (LFIV…IAMV).

Belongs to the myelin proteolipid protein family.

Its subcellular location is the membrane. The chain is Proteolipid protein DM beta from Squalus acanthias (Spiny dogfish).